Reading from the N-terminus, the 142-residue chain is Hemoglobin subunit pi (142 aa).

The 141-residue stretch at 2 to 142 folds into the Globin domain; sequence TLTQAEKAAV…VSSVLTEKYR (141 aa). Heme b contacts are provided by His59 and His88.

Belongs to the globin family.

In terms of biological role, the pi' chain is the counterpart of the alpha chain in the major early embryonic hemoglobin P. The chain is Hemoglobin subunit pi from Cairina moschata (Muscovy duck).